Consider the following 102-residue polypeptide: uncharacterized protein (102 aa).

Residues 27-47 (TISLVSAGLLEEIFLLFGLTF) form a helical membrane-spanning segment.

The protein resides in the membrane. This is an uncharacterized protein from Saccharomyces cerevisiae (strain ATCC 204508 / S288c) (Baker's yeast).